Consider the following 548-residue polypeptide: Putative F-box protein At1g33020 (548 aa).

Residues 4–53 (AENLDSIPTDLILEIFSRMSTKSIGRCRCVSKLWKSMLGHPYFTELFLTR) form the F-box domain. Residues 380-404 (KPISPPKQKPKPPSTETSSREDHQG) are disordered. Over residues 382-392 (ISPPKQKPKPP) the composition is skewed to pro residues.

This chain is Putative F-box protein At1g33020, found in Arabidopsis thaliana (Mouse-ear cress).